We begin with the raw amino-acid sequence, 89 residues long: uncharacterized protein (89 aa).

The next 2 helical transmembrane spans lie at 11–31 (IFGAVILVSMIGALVAEPIAL) and 63–83 (AAISAALGPAGLASGVFTVVF).

Its subcellular location is the cell membrane. This is an uncharacterized protein from Methanocaldococcus jannaschii (strain ATCC 43067 / DSM 2661 / JAL-1 / JCM 10045 / NBRC 100440) (Methanococcus jannaschii).